Consider the following 249-residue polypeptide: Protection of telomeres protein poz1 (249 aa).

Interacts with pot1, rap1 and tpz1.

Its subcellular location is the cytoplasm. The protein localises to the nucleus. It localises to the chromosome. It is found in the telomere. Functionally, telomeric DNA-binding protein that negatively regulates telomerase and telomere length. The polypeptide is Protection of telomeres protein poz1 (poz1) (Schizosaccharomyces pombe (strain 972 / ATCC 24843) (Fission yeast)).